A 185-amino-acid polypeptide reads, in one-letter code: ATP synthase subunit delta (185 aa).

This sequence belongs to the ATPase delta chain family. As to quaternary structure, F-type ATPases have 2 components, F(1) - the catalytic core - and F(0) - the membrane proton channel. F(1) has five subunits: alpha(3), beta(3), gamma(1), delta(1), epsilon(1). F(0) has three main subunits: a(1), b(2) and c(10-14). The alpha and beta chains form an alternating ring which encloses part of the gamma chain. F(1) is attached to F(0) by a central stalk formed by the gamma and epsilon chains, while a peripheral stalk is formed by the delta and b chains.

The protein resides in the cell inner membrane. Its function is as follows. F(1)F(0) ATP synthase produces ATP from ADP in the presence of a proton or sodium gradient. F-type ATPases consist of two structural domains, F(1) containing the extramembraneous catalytic core and F(0) containing the membrane proton channel, linked together by a central stalk and a peripheral stalk. During catalysis, ATP synthesis in the catalytic domain of F(1) is coupled via a rotary mechanism of the central stalk subunits to proton translocation. In terms of biological role, this protein is part of the stalk that links CF(0) to CF(1). It either transmits conformational changes from CF(0) to CF(1) or is implicated in proton conduction. This is ATP synthase subunit delta from Gemmatimonas aurantiaca (strain DSM 14586 / JCM 11422 / NBRC 100505 / T-27).